The sequence spans 618 residues: Glutathione-regulated potassium-efflux system protein (618 aa).

A run of 12 helical transmembrane segments spans residues 6–26 (NPEL…VPLF), 32–52 (GSVL…FGIV), 55–75 (PTAV…IIGL), 94–114 (LLQV…LLGL), 118–138 (VSFI…MQSL), 152–172 (VIST…SVAF), 186–206 (WVSI…GKWL), 227–247 (ALLV…SMAM), 274–294 (GLLL…HLVF), 298–318 (ILLL…VYII), 336–356 (MAHG…AEVI), and 362–382 (ATFT…AQIA). In terms of domain architecture, RCK N-terminal spans 409 to 525 (EDNVLVIGFG…LIKQDVDFIV (117 aa)).

It belongs to the monovalent cation:proton antiporter 2 (CPA2) transporter (TC 2.A.37) family.

Its subcellular location is the cell inner membrane. Transport system that facilitate potassium-efflux, possibly by potassium-proton antiport. The sequence is that of Glutathione-regulated potassium-efflux system protein (kefBC) from Haemophilus influenzae (strain ATCC 51907 / DSM 11121 / KW20 / Rd).